Consider the following 335-residue polypeptide: Histidinol-phosphate aminotransferase (335 aa).

The residue at position 202 (K202) is an N6-(pyridoxal phosphate)lysine.

This sequence belongs to the class-II pyridoxal-phosphate-dependent aminotransferase family. Histidinol-phosphate aminotransferase subfamily. As to quaternary structure, homodimer. Pyridoxal 5'-phosphate is required as a cofactor.

The catalysed reaction is L-histidinol phosphate + 2-oxoglutarate = 3-(imidazol-4-yl)-2-oxopropyl phosphate + L-glutamate. It participates in amino-acid biosynthesis; L-histidine biosynthesis; L-histidine from 5-phospho-alpha-D-ribose 1-diphosphate: step 7/9. In Thermotoga maritima (strain ATCC 43589 / DSM 3109 / JCM 10099 / NBRC 100826 / MSB8), this protein is Histidinol-phosphate aminotransferase.